The following is a 107-amino-acid chain: Chlorobenzene dioxygenase, ferredoxin component (107 aa).

Positions 4–99 (TYIMRQSDLP…IKVEGGDVHV (96 aa)) constitute a Rieske domain. C43, H45, C62, and H65 together coordinate [2Fe-2S] cluster.

It belongs to the bacterial ring-hydroxylating dioxygenase ferredoxin component family. This dioxygenase system consists of four proteins: the two subunits of the oxygenase component (TecA1 and TecA2), a ferredoxin (TecA3) and a ferredoxin reductase (TecA4). It depends on [2Fe-2S] cluster as a cofactor.

Its pathway is aromatic compound metabolism. Functionally, part of the chlorobenzene dioxygenase system that catalyzes the dihydroxylation of a range of aromatic compounds, including chlorinated benzenes and toluenes, and dinuclear aromatics such as biphenyl and dibenzo-p-dioxin. In Cupriavidus sp. (strain PS12), this protein is Chlorobenzene dioxygenase, ferredoxin component.